Consider the following 378-residue polypeptide: Cytochrome P450 2C15 (378 aa).

A heme-binding site is contributed by Cys-323.

The protein belongs to the cytochrome P450 family. The cofactor is heme.

The protein localises to the endoplasmic reticulum membrane. It is found in the microsome membrane. It catalyses the reaction an organic molecule + reduced [NADPH--hemoprotein reductase] + O2 = an alcohol + oxidized [NADPH--hemoprotein reductase] + H2O + H(+). In terms of biological role, cytochromes P450 are a group of heme-thiolate monooxygenases. In liver microsomes, this enzyme is involved in an NADPH-dependent electron transport pathway. It oxidizes a variety of structurally unrelated compounds, including steroids, fatty acids, and xenobiotics. The polypeptide is Cytochrome P450 2C15 (CYP2C15) (Oryctolagus cuniculus (Rabbit)).